Reading from the N-terminus, the 83-residue chain is Small ribosomal subunit protein bS16 (83 aa).

The protein belongs to the bacterial ribosomal protein bS16 family.

In Magnetococcus marinus (strain ATCC BAA-1437 / JCM 17883 / MC-1), this protein is Small ribosomal subunit protein bS16.